We begin with the raw amino-acid sequence, 101 residues long: Small ribosomal subunit protein uS14A (101 aa).

A disordered region spans residues 31 to 67 (LRRPSSTEAERLAAQRELRRQPRDASPTRVRNRDQID). Basic and acidic residues predominate over residues 38 to 53 (EAERLAAQRELRRQPR).

It belongs to the universal ribosomal protein uS14 family. In terms of assembly, part of the 30S ribosomal subunit. Contacts proteins S3 and S10.

Binds 16S rRNA, required for the assembly of 30S particles and may also be responsible for determining the conformation of the 16S rRNA at the A site. In Streptomyces coelicolor (strain ATCC BAA-471 / A3(2) / M145), this protein is Small ribosomal subunit protein uS14A.